Consider the following 150-residue polypeptide: uncharacterized protein (150 aa).

3 helical membrane-spanning segments follow: residues 48–68 (LFLL…CFLF), 89–109 (VFIF…YLLP), and 123–143 (REVF…IFTL).

The protein to M.pneumoniae MPN_085 central region.

It localises to the cell membrane. This is an uncharacterized protein from Mycoplasma pneumoniae (strain ATCC 29342 / M129 / Subtype 1) (Mycoplasmoides pneumoniae).